Reading from the N-terminus, the 145-residue chain is Putative pre-16S rRNA nuclease (145 aa).

The protein belongs to the YqgF nuclease family.

Its subcellular location is the cytoplasm. In terms of biological role, could be a nuclease involved in processing of the 5'-end of pre-16S rRNA. This is Putative pre-16S rRNA nuclease from Sulfurihydrogenibium sp. (strain YO3AOP1).